The sequence spans 155 residues: Transcription antitermination protein NusB (155 aa).

The protein belongs to the NusB family.

In terms of biological role, involved in transcription antitermination. Required for transcription of ribosomal RNA (rRNA) genes. Binds specifically to the boxA antiterminator sequence of the ribosomal RNA (rrn) operons. The sequence is that of Transcription antitermination protein NusB from Vibrio vulnificus (strain CMCP6).